A 196-amino-acid chain; its full sequence is MSSYIPYVIERTGRGERSYDIYSRLLKDRIILLSGEINDHIASSIVAQLLFLEAEDPEKDINFYINSPGGVITSAFSIYDTMNYIHSDISTICIGQAASAGAFLLSSGTKGKRFSLPNSRIMIHQPLGGAQGQATDIEIQAREILRLKKILNEIMAHNTGQKIEKITQDTERDFFMSGEEAKKYGLVDEILTKSLK.

The active-site Nucleophile is S99. H124 is an active-site residue.

This sequence belongs to the peptidase S14 family. As to quaternary structure, fourteen ClpP subunits assemble into 2 heptameric rings which stack back to back to give a disk-like structure with a central cavity, resembling the structure of eukaryotic proteasomes.

The protein localises to the cytoplasm. It catalyses the reaction Hydrolysis of proteins to small peptides in the presence of ATP and magnesium. alpha-casein is the usual test substrate. In the absence of ATP, only oligopeptides shorter than five residues are hydrolyzed (such as succinyl-Leu-Tyr-|-NHMec, and Leu-Tyr-Leu-|-Tyr-Trp, in which cleavage of the -Tyr-|-Leu- and -Tyr-|-Trp bonds also occurs).. Cleaves peptides in various proteins in a process that requires ATP hydrolysis. Has a chymotrypsin-like activity. Plays a major role in the degradation of misfolded proteins. The polypeptide is ATP-dependent Clp protease proteolytic subunit (Helicobacter hepaticus (strain ATCC 51449 / 3B1)).